A 165-amino-acid chain; its full sequence is Transcription antitermination protein NusB (165 aa).

The protein belongs to the NusB family.

Functionally, involved in transcription antitermination. Required for transcription of ribosomal RNA (rRNA) genes. Binds specifically to the boxA antiterminator sequence of the ribosomal RNA (rrn) operons. This chain is Transcription antitermination protein NusB, found in Chlorobium phaeobacteroides (strain DSM 266 / SMG 266 / 2430).